The following is a 390-amino-acid chain: Chorismate synthase 1 (390 aa).

The NADP(+) site is built by R39 and R45. FMN is bound by residues 132-134 (RSS), 253-254 (NA), G298, 313-317 (KPIPT), and R339.

It belongs to the chorismate synthase family. In terms of assembly, homotetramer. The cofactor is FMNH2.

The enzyme catalyses 5-O-(1-carboxyvinyl)-3-phosphoshikimate = chorismate + phosphate. The protein operates within metabolic intermediate biosynthesis; chorismate biosynthesis; chorismate from D-erythrose 4-phosphate and phosphoenolpyruvate: step 7/7. Its function is as follows. Catalyzes the anti-1,4-elimination of the C-3 phosphate and the C-6 proR hydrogen from 5-enolpyruvylshikimate-3-phosphate (EPSP) to yield chorismate, which is the branch point compound that serves as the starting substrate for the three terminal pathways of aromatic amino acid biosynthesis. This reaction introduces a second double bond into the aromatic ring system. The protein is Chorismate synthase 1 of Bacillus anthracis.